We begin with the raw amino-acid sequence, 398 residues long: Sphingosine 1-phosphate receptor 5 (398 aa).

Over 1 to 40 (MESGLLRPAPVSEVIVLHYNYTGKLRGARYQPGAGLRADA) the chain is Extracellular. Asparagine 20 is a glycosylation site (N-linked (GlcNAc...) asparagine). A helical membrane pass occupies residues 41–61 (VVCLAVCAFIVLENLAVLLVL). The Cytoplasmic segment spans residues 62–70 (GRHPRFHAP). Residues 71–91 (MFLLLGSLTLSDLLAGAAYAA) traverse the membrane as a helical segment. The Extracellular portion of the chain corresponds to 92 to 111 (NILLSGPLTLKLSPALWFAR). Residues 112–132 (EGGVFVALTASVLSLLAIALE) traverse the membrane as a helical segment. At 133 to 151 (RSLTMARRGPAPVSSRGRT) the chain is on the cytoplasmic side. Residues 152–172 (LAMAAAAWGVSLLLGLLPALG) traverse the membrane as a helical segment. Topologically, residues 173-192 (WNCLGRLDACSTVLPLYAKA) are extracellular. The chain crosses the membrane as a helical span at residues 193–213 (YVLFCVLAFVGILAAICALYA). At 214 to 252 (RIYCQVRANARRLPARPGTAGTTSTRARRKPRSLALLRT) the chain is on the cytoplasmic side. A helical transmembrane segment spans residues 253–273 (LSVVLLAFVACWGPLFLLLLL). Topologically, residues 274-287 (DVACPARTCPVLLQ) are extracellular. Residues 288 to 308 (ADPFLGLAMANSLLNPIIYTL) form a helical membrane-spanning segment. Residues 309 to 398 (TNRDLRHALL…RTLVSEPAAD (90 aa)) lie on the Cytoplasmic side of the membrane. Cysteine 323 carries the S-palmitoyl cysteine lipid modification. Residues 329–398 (GRDPSGSQQS…RTLVSEPAAD (70 aa)) are disordered. The segment covering 333-347 (SGSQQSASAAEASGG) has biased composition (low complexity). Serine 381 is modified (phosphoserine).

It belongs to the G-protein coupled receptor 1 family. Widely expressed in the brain, most prominently in the corpus callosum, which is predominantly white matter. Detected in spleen, peripheral blood leukocytes, placenta, lung, aorta and fetal spleen. Low-level signal detected in many tissue extracts. Overexpressed in leukemic large granular lymphocytes. Isoform 1 is predominantly expressed in peripheral tissues. Isoform 2 is expressed in brain, spleen and peripheral blood leukocytes.

The protein resides in the cell membrane. In terms of biological role, receptor for the lysosphingolipid sphingosine 1-phosphate (S1P). S1P is a bioactive lysophospholipid that elicits diverse physiological effect on most types of cells and tissues. Is coupled to both the G(i/0)alpha and G(12) subclass of heteromeric G-proteins. May play a regulatory role in the transformation of radial glial cells into astrocytes and may affect proliferative activity of these cells. The sequence is that of Sphingosine 1-phosphate receptor 5 (S1PR5) from Homo sapiens (Human).